The following is a 322-amino-acid chain: Biotin synthase (322 aa).

Positions 39–266 (NQVQISSLLN…KSVVRLSAGR (228 aa)) constitute a Radical SAM core domain. Cys54, Cys58, and Cys61 together coordinate [4Fe-4S] cluster. Positions 98, 129, 189, and 261 each coordinate [2Fe-2S] cluster.

It belongs to the radical SAM superfamily. Biotin synthase family. As to quaternary structure, homodimer. The cofactor is [4Fe-4S] cluster. It depends on [2Fe-2S] cluster as a cofactor.

It carries out the reaction (4R,5S)-dethiobiotin + (sulfur carrier)-SH + 2 reduced [2Fe-2S]-[ferredoxin] + 2 S-adenosyl-L-methionine = (sulfur carrier)-H + biotin + 2 5'-deoxyadenosine + 2 L-methionine + 2 oxidized [2Fe-2S]-[ferredoxin]. The protein operates within cofactor biosynthesis; biotin biosynthesis; biotin from 7,8-diaminononanoate: step 2/2. Functionally, catalyzes the conversion of dethiobiotin (DTB) to biotin by the insertion of a sulfur atom into dethiobiotin via a radical-based mechanism. This Vesicomyosocius okutanii subsp. Calyptogena okutanii (strain HA) protein is Biotin synthase.